The sequence spans 161 residues: Chorion class B protein L12 (161 aa).

Residues 1–21 form the signal peptide; the sequence is MAAKLILFVCATALVAQSVLS. The interval 22–52 is left arm; that stretch reads IGCGCGGRGYGGLGYGGLGYGGLGGGCGRGF. Repeat copies occupy residues 30–34, 35–39, and 40–44. Positions 30 to 44 are 3 X 5 AA tandem repeats of G-Y-G-G-L; sequence GYGGLGYGGLGYGGL. The segment at 53-121 is central domain; that stretch reads SGGGLPVATA…GNGAVGITRE (69 aa). Positions 122 to 161 are right arm (Gly-rich tandem repeats); it reads GGFGYGAGYGDGYGLGFGGYGGGYGLGNGGYGGCGCGWGY.

Belongs to the chorion protein family.

In terms of biological role, this protein is one of many from the eggshell of the silk moth. The chain is Chorion class B protein L12 from Bombyx mori (Silk moth).